We begin with the raw amino-acid sequence, 610 residues long: Serine/threonine-protein kinase RCK2 (610 aa).

2 disordered regions span residues 1–55 and 99–127; these read MLKI…QDKN and TSVP…SLSE. A compositionally biased stretch (basic and acidic residues) spans 11–24; the sequence is KKPDQADLSQESKK. Positions 31–55 are enriched in polar residues; that stretch reads RSSGTNNKDVSQITSSPKKSFQDKN. S46 and S50 each carry phosphoserine. Residues 163–478 enclose the Protein kinase domain; it reads YKLINKIGEG…IDQFLDDPWL (316 aa). 169-177 contacts ATP; sequence IGEGAFSKV. A Phosphoserine modification is found at S187. K201 provides a ligand contact to ATP. D313 serves as the catalytic Proton acceptor. T350 carries the phosphothreonine modification. The calmodulin-binding stretch occupies residues 493-506; sequence KKAGTSERRHPHKK. Phosphoserine is present on S520. A disordered region spans residues 541–564; that stretch reads EDRMGTRGGLGSLAEDEELEDSYS.

This sequence belongs to the protein kinase superfamily. CAMK Ser/Thr protein kinase family. CaMK subfamily. In terms of processing, autophosphorylated. Phosphorylated by HOG1 at Ser-520 after osmotic stress.

Its subcellular location is the cytoplasm. The catalysed reaction is L-seryl-[protein] + ATP = O-phospho-L-seryl-[protein] + ADP + H(+). It carries out the reaction L-threonyl-[protein] + ATP = O-phospho-L-threonyl-[protein] + ADP + H(+). With respect to regulation, activated by Ser-520 phosphorylation by HOG1. Functionally, serine/threonine-protein kinase involved in a signal transduction pathway that is activated by changes in the osmolarity of the extracellular environment. The polypeptide is Serine/threonine-protein kinase RCK2 (RCK2) (Saccharomyces cerevisiae (strain ATCC 204508 / S288c) (Baker's yeast)).